The following is a 50-amino-acid chain: Temporin-SHc (50 aa).

An N-terminal signal peptide occupies residues 1–10 (FLGTINLSLC). A propeptide spanning residues 11 to 35 (EQERDADEEERRDEPDGSNVEVEKR) is cleaved from the precursor. The residue at position 48 (Phe48) is a Phenylalanine amide.

In terms of tissue distribution, expressed by the skin glands.

Its subcellular location is the secreted. The protein resides in the target cell membrane. Its function is as follows. Amphipathic alpha-helical antimicrobial peptide with potent activity against some Gram-positive bacteria (MIC=4-&gt;80 uM), potent activity against fungi (MIC=10-20 uM), and no activity against Gram-negative bacteria. Does not display anti-leishmania activity. Does not show hemolytic activity (LC(50)&gt;80 uM). The polypeptide is Temporin-SHc (Pelophylax saharicus (Sahara frog)).